Here is a 490-residue protein sequence, read N- to C-terminus: Bifunctional protein HldE (490 aa).

The ribokinase stretch occupies residues 1–330; it reads MLDFEAVLPA…RKVLPPASLA (330 aa). An ATP-binding site is contributed by 205–208; the sequence is NRKE. The active site involves Asp-275. Residues 358-490 form a cytidylyltransferase region; sequence FTNGCFDILH…LVARAQNGKA (133 aa).

This sequence in the N-terminal section; belongs to the carbohydrate kinase PfkB family. The protein in the C-terminal section; belongs to the cytidylyltransferase family. As to quaternary structure, homodimer.

The catalysed reaction is D-glycero-beta-D-manno-heptose 7-phosphate + ATP = D-glycero-beta-D-manno-heptose 1,7-bisphosphate + ADP + H(+). It carries out the reaction D-glycero-beta-D-manno-heptose 1-phosphate + ATP + H(+) = ADP-D-glycero-beta-D-manno-heptose + diphosphate. The protein operates within nucleotide-sugar biosynthesis; ADP-L-glycero-beta-D-manno-heptose biosynthesis; ADP-L-glycero-beta-D-manno-heptose from D-glycero-beta-D-manno-heptose 7-phosphate: step 1/4. It participates in nucleotide-sugar biosynthesis; ADP-L-glycero-beta-D-manno-heptose biosynthesis; ADP-L-glycero-beta-D-manno-heptose from D-glycero-beta-D-manno-heptose 7-phosphate: step 3/4. In terms of biological role, catalyzes the phosphorylation of D-glycero-D-manno-heptose 7-phosphate at the C-1 position to selectively form D-glycero-beta-D-manno-heptose-1,7-bisphosphate. Functionally, catalyzes the ADP transfer from ATP to D-glycero-beta-D-manno-heptose 1-phosphate, yielding ADP-D-glycero-beta-D-manno-heptose. The sequence is that of Bifunctional protein HldE from Rhodopseudomonas palustris (strain BisB18).